We begin with the raw amino-acid sequence, 125 residues long: Cu-Zn superoxide dismutase-like protein (125 aa).

Cysteine 52 and cysteine 102 form a disulfide bridge.

It belongs to the Cu-Zn superoxide dismutase family.

The protein resides in the host cytoplasm. Its function is as follows. Virion protein with no enzymatic activity. In Bos taurus (Bovine), this protein is Cu-Zn superoxide dismutase-like protein.